The chain runs to 463 residues: Fumarate hydratase class II (463 aa).

Substrate is bound by residues 98 to 100 (SGT), 129 to 132 (HPND), 139 to 141 (SSN), and Thr187. His188 (proton donor/acceptor) is an active-site residue. The active site involves Ser318. Substrate is bound by residues Ser319 and 324–326 (KVN).

It belongs to the class-II fumarase/aspartase family. Fumarase subfamily. Homotetramer.

Its subcellular location is the cytoplasm. It carries out the reaction (S)-malate = fumarate + H2O. It functions in the pathway carbohydrate metabolism; tricarboxylic acid cycle; (S)-malate from fumarate: step 1/1. Its function is as follows. Involved in the TCA cycle. Catalyzes the stereospecific interconversion of fumarate to L-malate. This Brucella melitensis biotype 1 (strain ATCC 23456 / CCUG 17765 / NCTC 10094 / 16M) protein is Fumarate hydratase class II.